A 548-amino-acid chain; its full sequence is Glucose-6-phosphate isomerase (548 aa).

Glutamate 355 (proton donor) is an active-site residue. Active-site residues include histidine 386 and lysine 514.

The protein belongs to the GPI family.

It is found in the cytoplasm. It catalyses the reaction alpha-D-glucose 6-phosphate = beta-D-fructose 6-phosphate. It participates in carbohydrate biosynthesis; gluconeogenesis. Its pathway is carbohydrate degradation; glycolysis; D-glyceraldehyde 3-phosphate and glycerone phosphate from D-glucose: step 2/4. In terms of biological role, catalyzes the reversible isomerization of glucose-6-phosphate to fructose-6-phosphate. This is Glucose-6-phosphate isomerase from Photorhabdus laumondii subsp. laumondii (strain DSM 15139 / CIP 105565 / TT01) (Photorhabdus luminescens subsp. laumondii).